Here is a 423-residue protein sequence, read N- to C-terminus: UDP-N-acetylglucosamine 1-carboxyvinyltransferase 2 (423 aa).

23–24 is a binding site for phosphoenolpyruvate; the sequence is KN. Residue Arg96 participates in UDP-N-acetyl-alpha-D-glucosamine binding. Cys120 (proton donor) is an active-site residue. Cys120 carries the 2-(S-cysteinyl)pyruvic acid O-phosphothioketal modification. Residues 125–129, Asp309, and Val331 contribute to the UDP-N-acetyl-alpha-D-glucosamine site; that span reads RPIDL.

The protein belongs to the EPSP synthase family. MurA subfamily.

The protein localises to the cytoplasm. It carries out the reaction phosphoenolpyruvate + UDP-N-acetyl-alpha-D-glucosamine = UDP-N-acetyl-3-O-(1-carboxyvinyl)-alpha-D-glucosamine + phosphate. The protein operates within cell wall biogenesis; peptidoglycan biosynthesis. In terms of biological role, cell wall formation. Adds enolpyruvyl to UDP-N-acetylglucosamine. This is UDP-N-acetylglucosamine 1-carboxyvinyltransferase 2 from Streptococcus agalactiae serotype III (strain NEM316).